A 658-amino-acid polypeptide reads, in one-letter code: Non-reducing end beta-L-arabinofuranosidase (658 aa).

Beta-L-arabinofuranose contacts are provided by residues H142, 192-194 (DGH), H270, and E322. E322 acts as the Proton donor/acceptor in catalysis. E338, C340, C417, and C418 together coordinate Zn(2+). The active-site Nucleophile; S-glycosyl-cysteine intermediate is the C417.

Belongs to the glycosyl hydrolase 127 family. In terms of assembly, homodimer in solution. Zn(2+) is required as a cofactor.

It catalyses the reaction beta-L-arabinofuranosyl-(1-&gt;2)-beta-L-arabinofuranose + H2O = 2 beta-L-arabinofuranose. Strongly inhibited in the presence of thiol modifiers, suggesting a crucial role for cysteine residues in catalysis. Slightly inhibited by EDTA. Functionally, beta-L-arabinofuranosidase that removes the beta-L-arabinofuranose residue from the non-reducing end of various substrates, including beta-L-arabinofuranosyl-hydroxyproline (Ara-Hyp), Ara-beta-1,2-Ara-beta-Hyp (Ara(2)-Hyp), Ara-beta-1,2-Ara-beta-1,2-Ara-beta-Hyp (Ara(3)-Hyp), and beta-L-arabinofuranosyl-(1-&gt;2)-1-O-methyl-beta-L-arabinofuranose. In the presence of 1-alkanols, shows transglycosylation activity, retaining the anomeric configuration of the arabinofuranose residue. In Bifidobacterium longum subsp. longum (strain ATCC 15707 / DSM 20219 / JCM 1217 / NCTC 11818 / E194b), this protein is Non-reducing end beta-L-arabinofuranosidase.